Reading from the N-terminus, the 100-residue chain is uncharacterized protein (100 aa).

This is an uncharacterized protein from Rickettsia prowazekii (strain Madrid E).